We begin with the raw amino-acid sequence, 370 residues long: tRNA N(3)-cytidine methyltransferase METTL2 (370 aa).

S-adenosyl-L-methionine contacts are provided by Trp-72, Tyr-76, Gly-181, Asp-206, Asp-232, Leu-233, and Ile-253.

The protein belongs to the methyltransferase superfamily. METL family. Monomer.

Its subcellular location is the cytoplasm. The catalysed reaction is cytidine(32) in tRNA(Thr) + S-adenosyl-L-methionine = N(3)-methylcytidine(32) in tRNA(Thr) + S-adenosyl-L-homocysteine + H(+). It carries out the reaction cytidine(32) in tRNA(Arg)(CCU) + S-adenosyl-L-methionine = N(3)-methylcytidine(32) in tRNA(Arg)(CCU) + S-adenosyl-L-homocysteine + H(+). Functionally, S-adenosyl-L-methionine-dependent methyltransferase that mediates N(3)-methylcytidine modification of residue 32 of the tRNA anticodon loop of tRNA(Thr)(UGU) and tRNA(Arg)(CCU). N(3)-methylcytidine methylation by METTL2 requires the N6-threonylcarbamoylation of tRNA (t6A37) by the EKC/KEOPS complex as prerequisite. In Gallus gallus (Chicken), this protein is tRNA N(3)-cytidine methyltransferase METTL2 (METTL2).